The chain runs to 722 residues: Neprilysin-1 (722 aa).

Residues 1 to 17 (MAVALLVALCVVSSRMA) form the signal peptide. The Peptidase M13 domain maps to 32–722 (VCNSPVCQKA…MNPTHKCLLW (691 aa)). Intrachain disulfides connect Cys33-Cys38, Cys56-Cys707, Cys64-Cys667, Cys120-Cys378, and Cys589-Cys719. Asn100, Asn184, Asn207, and Asn424 each carry an N-linked (GlcNAc...) asparagine glycan. His552 provides a ligand contact to Zn(2+). Residue Glu553 is part of the active site. His556 contributes to the Zn(2+) binding site. N-linked (GlcNAc...) asparagine glycosylation occurs at Asn609. Glu614 is a binding site for Zn(2+). Catalysis depends on Asp618, which acts as the Proton donor.

This sequence belongs to the peptidase M13 family. Zn(2+) is required as a cofactor. Post-translationally, contains 5 disulfide bonds. As to expression, expressed by the venom gland.

The protein resides in the secreted. This is Neprilysin-1 from Trittame loki (Brush-footed trapdoor spider).